The chain runs to 519 residues: Glycogen synthase (519 aa).

Positions 1–40 (MISAAVEPHVDAFKPDNREPLTPDFATTGKAPGAQRQHNP) are disordered. The span at 8–21 (PHVDAFKPDNREPL) shows a compositional bias: basic and acidic residues. Lys57 serves as a coordination point for ADP-alpha-D-glucose.

This sequence belongs to the glycosyltransferase 1 family. Bacterial/plant glycogen synthase subfamily.

The catalysed reaction is [(1-&gt;4)-alpha-D-glucosyl](n) + ADP-alpha-D-glucose = [(1-&gt;4)-alpha-D-glucosyl](n+1) + ADP + H(+). It participates in glycan biosynthesis; glycogen biosynthesis. Synthesizes alpha-1,4-glucan chains using ADP-glucose. This Pseudomonas putida (strain ATCC 47054 / DSM 6125 / CFBP 8728 / NCIMB 11950 / KT2440) protein is Glycogen synthase.